Reading from the N-terminus, the 506-residue chain is Abscisic acid 8'-hydroxylase 2 (506 aa).

The chain crosses the membrane as a helical span at residues 3–23 (FLLFFVFVTAAVLCFVVPAFL). Cys-437 is a binding site for heme.

Belongs to the cytochrome P450 family. Heme serves as cofactor. In internodes and expanding leaves. Weak expression in seedlings.

Its subcellular location is the membrane. The enzyme catalyses 2-cis-(+)-abscisate + reduced [NADPH--hemoprotein reductase] + O2 = (+)-8'-hydroxyabscisate + oxidized [NADPH--hemoprotein reductase] + H2O + H(+). Its pathway is plant hormone degradation; abscisic acid degradation. Functionally, involved in the oxidative degradation of abscisic acid. The sequence is that of Abscisic acid 8'-hydroxylase 2 (CYP707A6) from Oryza sativa subsp. indica (Rice).